The primary structure comprises 543 residues: CTP synthase (543 aa).

Residues 1–265 are amidoligase domain; that stretch reads MTRYIFVTGG…DDFVVERFGL (265 aa). Residue S13 participates in CTP binding. S13 lines the UTP pocket. Residues 14-19 and D71 each bind ATP; that span reads SLGKGI. Positions 71 and 139 each coordinate Mg(2+). Residues 146–148, 186–191, and K222 each bind CTP; these read DIE and KTKPTQ. UTP contacts are provided by residues 186 to 191 and K222; that span reads KTKPTQ. The Glutamine amidotransferase type-1 domain maps to 290-541; the sequence is TIAMVGKYME…VKAALAQHQK (252 aa). G351 is an L-glutamine binding site. Catalysis depends on C378, which acts as the Nucleophile; for glutamine hydrolysis. Residues 379–382, E402, and R469 each bind L-glutamine; that span reads LGMQ. Residues H514 and E516 contribute to the active site.

Belongs to the CTP synthase family. In terms of assembly, homotetramer.

It carries out the reaction UTP + L-glutamine + ATP + H2O = CTP + L-glutamate + ADP + phosphate + 2 H(+). It catalyses the reaction L-glutamine + H2O = L-glutamate + NH4(+). The catalysed reaction is UTP + NH4(+) + ATP = CTP + ADP + phosphate + 2 H(+). It participates in pyrimidine metabolism; CTP biosynthesis via de novo pathway; CTP from UDP: step 2/2. Allosterically activated by GTP, when glutamine is the substrate; GTP has no effect on the reaction when ammonia is the substrate. The allosteric effector GTP functions by stabilizing the protein conformation that binds the tetrahedral intermediate(s) formed during glutamine hydrolysis. Inhibited by the product CTP, via allosteric rather than competitive inhibition. Functionally, catalyzes the ATP-dependent amination of UTP to CTP with either L-glutamine or ammonia as the source of nitrogen. Regulates intracellular CTP levels through interactions with the four ribonucleotide triphosphates. This is CTP synthase from Pseudomonas fluorescens (strain Pf0-1).